Reading from the N-terminus, the 206-residue chain is MKIVIASSHGYKIRETKTFLKRLGDFDIFSLSDFPDYKLPQEQEDSITANALTKGIHAANHLGCWVIADDTMLRVPALNGLPGPLSANFAGVGAYDKDHRKKLLDLMSSLESLVDRSAYFECCVVLVSPNQEIFKTYGICEGYISHQEKGSSGFGYDPIFVKYDYKQTFAELSEDVKNQVSHRAKALQKLAPHLQSLFEKHLLTRD.

Substrate is bound at residue 7-12 (SSHGYK). D70 (proton acceptor) is an active-site residue. Residue D70 coordinates Mg(2+). Substrate-binding positions include T71, 154-157 (FGYD), K177, and 182-183 (HR).

Belongs to the HAM1 NTPase family. As to quaternary structure, homodimer. The cofactor is Mg(2+).

The enzyme catalyses XTP + H2O = XMP + diphosphate + H(+). The catalysed reaction is dITP + H2O = dIMP + diphosphate + H(+). It carries out the reaction ITP + H2O = IMP + diphosphate + H(+). Functionally, pyrophosphatase that catalyzes the hydrolysis of nucleoside triphosphates to their monophosphate derivatives, with a high preference for the non-canonical purine nucleotides XTP (xanthosine triphosphate), dITP (deoxyinosine triphosphate) and ITP. Seems to function as a house-cleaning enzyme that removes non-canonical purine nucleotides from the nucleotide pool, thus preventing their incorporation into DNA/RNA and avoiding chromosomal lesions. The chain is dITP/XTP pyrophosphatase from Chlamydia pneumoniae (Chlamydophila pneumoniae).